A 385-amino-acid polypeptide reads, in one-letter code: 8-amino-7-oxononanoate synthase (385 aa).

A substrate-binding site is contributed by arginine 21. 108–109 (GF) is a pyridoxal 5'-phosphate binding site. Residue histidine 133 coordinates substrate. The pyridoxal 5'-phosphate site is built by serine 179, histidine 207, and threonine 233. Residue lysine 236 is modified to N6-(pyridoxal phosphate)lysine. Position 352 (threonine 352) interacts with substrate.

It belongs to the class-II pyridoxal-phosphate-dependent aminotransferase family. BioF subfamily. As to quaternary structure, homodimer. Requires pyridoxal 5'-phosphate as cofactor.

It catalyses the reaction 6-carboxyhexanoyl-[ACP] + L-alanine + H(+) = (8S)-8-amino-7-oxononanoate + holo-[ACP] + CO2. It functions in the pathway cofactor biosynthesis; biotin biosynthesis. Functionally, catalyzes the decarboxylative condensation of pimeloyl-[acyl-carrier protein] and L-alanine to produce 8-amino-7-oxononanoate (AON), [acyl-carrier protein], and carbon dioxide. This chain is 8-amino-7-oxononanoate synthase, found in Salmonella newport (strain SL254).